Reading from the N-terminus, the 460-residue chain is ATP synthase subunit beta (460 aa).

ATP is bound at residue 150–157; that stretch reads GGAGVGKT.

It belongs to the ATPase alpha/beta chains family. F-type ATPases have 2 components, CF(1) - the catalytic core - and CF(0) - the membrane proton channel. CF(1) has five subunits: alpha(3), beta(3), gamma(1), delta(1), epsilon(1). CF(0) has three main subunits: a(1), b(2) and c(9-12). The alpha and beta chains form an alternating ring which encloses part of the gamma chain. CF(1) is attached to CF(0) by a central stalk formed by the gamma and epsilon chains, while a peripheral stalk is formed by the delta and b chains.

It is found in the cell inner membrane. The enzyme catalyses ATP + H2O + 4 H(+)(in) = ADP + phosphate + 5 H(+)(out). Its function is as follows. Produces ATP from ADP in the presence of a proton gradient across the membrane. The catalytic sites are hosted primarily by the beta subunits. The protein is ATP synthase subunit beta of Yersinia pestis bv. Antiqua (strain Angola).